Reading from the N-terminus, the 201-residue chain is MSKKYEHLFKFIFVGDSGVGKSSILLRFTEDTFTESYISTIGVDFKIKTVYIEGKAIKLQIWDTAGQERFRVHNNSQYRGCHAVMVVYDVTDQRSFENVAKWIQEIERYARDNVIKMIIGNKSDMISQKVVDPFLAQEFADSLDITFKETSAKQAINIEDAFISLVKLCIDRIEEFKPSSTSSSTIILKKPQSQKSNCIIN.

15–22 (GDSGVGKS) contacts GTP. The short motif at 37–45 (YISTIGVDF) is the Effector region element. GTP is bound by residues 63-67 (DTAGQ) and 121-124 (NKSD). Residue Cys198 is modified to Cysteine methyl ester. The S-geranylgeranyl cysteine moiety is linked to residue Cys198. Residues 199–201 (IIN) constitute a propeptide, removed in mature form.

The protein belongs to the small GTPase superfamily. Rab family.

The protein resides in the cell membrane. The sequence is that of Ras-related protein RabA (rabA) from Dictyostelium discoideum (Social amoeba).